Reading from the N-terminus, the 454-residue chain is Cytochrome b-c1 complex subunit 2, mitochondrial (454 aa).

The transit peptide at 1-35 directs the protein to the mitochondrion; that stretch reads MISRSALSRGSQLALRRPAAAKTAQRGFAAAAASP.

Belongs to the peptidase M16 family. UQCRC2/QCR2 subfamily. Component of the ubiquinol-cytochrome c oxidoreductase (cytochrome b-c1 complex, complex III, CIII), a multisubunit enzyme composed of 10 subunits. The complex is composed of 3 respiratory subunits cytochrome b (cob), cytochrome c1 (cyt-1) and Rieske protein (fes-1), 2 core protein subunits pep and ucr-1, and 5 low-molecular weight protein subunits qcr6, qcr7, qcr8, qcr9 and probably NCU16844/qcr10. The complex exists as an obligatory dimer and forms supercomplexes (SCs) in the inner mitochondrial membrane with NADH-ubiquinone oxidoreductase (complex I, CI) and cytochrome c oxidase (complex IV, CIV), resulting in different assemblies (supercomplexes SCI(1)III(2), SCIII(2)IV(1) and SCIII(2)IV(2) as well as higher order I(x)III(y)IV(z) megacomplexes).

The protein localises to the mitochondrion inner membrane. In terms of biological role, component of the ubiquinol-cytochrome c oxidoreductase, a multisubunit transmembrane complex that is part of the mitochondrial electron transport chain which drives oxidative phosphorylation. The respiratory chain contains 3 multisubunit complexes succinate dehydrogenase (complex II, CII), ubiquinol-cytochrome c oxidoreductase (cytochrome b-c1 complex, complex III, CIII) and cytochrome c oxidase (complex IV, CIV), that cooperate to transfer electrons derived from NADH and succinate to molecular oxygen, creating an electrochemical gradient over the inner membrane that drives transmembrane transport and the ATP synthase. The cytochrome b-c1 complex catalyzes electron transfer from ubiquinol to cytochrome c, linking this redox reaction to translocation of protons across the mitochondrial inner membrane, with protons being carried across the membrane as hydrogens on the quinol. In the process called Q cycle, 2 protons are consumed from the matrix, 4 protons are released into the intermembrane space and 2 electrons are passed to cytochrome c. The polypeptide is Cytochrome b-c1 complex subunit 2, mitochondrial (ucr-1) (Neurospora crassa (strain ATCC 24698 / 74-OR23-1A / CBS 708.71 / DSM 1257 / FGSC 987)).